We begin with the raw amino-acid sequence, 232 residues long: Sugar fermentation stimulation protein homolog (232 aa).

It belongs to the SfsA family.

The sequence is that of Sugar fermentation stimulation protein homolog from Shouchella clausii (strain KSM-K16) (Alkalihalobacillus clausii).